The following is a 161-amino-acid chain: Ubiquitin-conjugating enzyme 15 (161 aa).

The 147-residue stretch at 15-161 (IACNRLQKEL…TRWWFHDDKV (147 aa)) folds into the UBC core domain. The active-site Glycyl thioester intermediate is the C99.

Belongs to the ubiquitin-conjugating enzyme family.

The enzyme catalyses S-ubiquitinyl-[E1 ubiquitin-activating enzyme]-L-cysteine + [E2 ubiquitin-conjugating enzyme]-L-cysteine = [E1 ubiquitin-activating enzyme]-L-cysteine + S-ubiquitinyl-[E2 ubiquitin-conjugating enzyme]-L-cysteine.. It functions in the pathway protein modification; protein ubiquitination. Accepts the ubiquitin from the E1 complex and catalyzes its covalent attachment to other proteins. The protein is Ubiquitin-conjugating enzyme 15 (UBC15) of Arabidopsis thaliana (Mouse-ear cress).